We begin with the raw amino-acid sequence, 187 residues long: MYDASDLRKGLKFEIDGDPFVIVDFQFKKPGKGQALYKCKLRNMISGAQFERTFRSGDKFNEASLEEHDMEYLYSEGGNFCFMNSVSFEQEFLGKDQVGDAVNLLKDNTVCTVLFFNGKAIGLTLPNFVNLRIVQSDPWAKGDTATGSTKPATLETGYEIQVPPFVDEGQLVKIDTRTCEYVERVNE.

It belongs to the elongation factor P family.

The protein resides in the cytoplasm. The protein operates within protein biosynthesis; polypeptide chain elongation. Involved in peptide bond synthesis. Stimulates efficient translation and peptide-bond synthesis on native or reconstituted 70S ribosomes in vitro. Probably functions indirectly by altering the affinity of the ribosome for aminoacyl-tRNA, thus increasing their reactivity as acceptors for peptidyl transferase. In Desulforapulum autotrophicum (strain ATCC 43914 / DSM 3382 / VKM B-1955 / HRM2) (Desulfobacterium autotrophicum), this protein is Elongation factor P.